A 412-amino-acid polypeptide reads, in one-letter code: uncharacterized protein (412 aa).

An N-terminal signal peptide occupies residues 1-21 (MIIPMLRILLIVLFVLNLVTS). Disordered regions lie at residues 85–134 (QPPA…STTT), 250–294 (STTE…TPGT), and 327–357 (VELG…HVRE). A compositionally biased stretch (low complexity) spans 88–105 (ASLTSLPAAPPSAQVAPP). The span at 124-134 (TPQASISSTTT) shows a compositional bias: polar residues. Composition is skewed to low complexity over residues 250–259 (STTENTTEQS) and 266–293 (TTST…GTPG). Positions 330–347 (GEGDDDEENDDDSSEEEE) are enriched in acidic residues. A compositionally biased stretch (basic and acidic residues) spans 348 to 357 (TKPPARHVRE). The ShKT domain maps to 371 to 408 (CDEEEDDKGKICKLWAAGGLCGTHKPTMFLFCRKTCLC).

This is an uncharacterized protein from Caenorhabditis elegans.